A 1193-amino-acid chain; its full sequence is uncharacterized protein (1193 aa).

The N-terminal stretch at 1–25 is a signal peptide; it reads MKIKFINYLLLFFIIFLNYNGFVKS. The Extracellular portion of the chain corresponds to 26-1172; sequence DCYQELDLVL…PQDPSDELST (1147 aa). Asn-90, Asn-183, Asn-226, Asn-265, Asn-281, Asn-345, Asn-357, Asn-436, Asn-516, Asn-552, Asn-583, Asn-627, Asn-712, Asn-765, Asn-822, Asn-938, Asn-1038, and Asn-1092 each carry an N-linked (GlcNAc...) asparagine glycan. The chain crosses the membrane as a helical span at residues 1173–1193; sequence SSFVQVNLLFLSILIFTIFIF.

The protein localises to the membrane. This is an uncharacterized protein from Dictyostelium discoideum (Social amoeba).